The primary structure comprises 549 residues: Chaperonin GroEL (549 aa).

ATP contacts are provided by residues 29 to 32 (TLGP), K50, 86 to 90 (DGTTT), G414, 478 to 480 (NAA), and D494.

It belongs to the chaperonin (HSP60) family. Forms a cylinder of 14 subunits composed of two heptameric rings stacked back-to-back. Interacts with the co-chaperonin GroES.

It is found in the cytoplasm. The catalysed reaction is ATP + H2O + a folded polypeptide = ADP + phosphate + an unfolded polypeptide.. Its function is as follows. Together with its co-chaperonin GroES, plays an essential role in assisting protein folding. The GroEL-GroES system forms a nano-cage that allows encapsulation of the non-native substrate proteins and provides a physical environment optimized to promote and accelerate protein folding. The polypeptide is Chaperonin GroEL (Psychrobacter cryohalolentis (strain ATCC BAA-1226 / DSM 17306 / VKM B-2378 / K5)).